Reading from the N-terminus, the 407-residue chain is 1-deoxy-D-xylulose 5-phosphate reductoisomerase (407 aa).

NADPH-binding residues include Thr25, Gly26, Ser27, Ile28, Asn53, and Asn136. 1-deoxy-D-xylulose 5-phosphate is bound at residue Lys137. Residue Glu138 coordinates NADPH. Residue Asp162 coordinates Mn(2+). 1-deoxy-D-xylulose 5-phosphate is bound by residues Ser163, Glu164, Ser188, and His211. A Mn(2+)-binding site is contributed by Glu164. Gly217 lines the NADPH pocket. 1-deoxy-D-xylulose 5-phosphate-binding residues include Ser224, Asn229, Lys230, and Glu233. Glu233 lines the Mn(2+) pocket.

Belongs to the DXR family. Mg(2+) serves as cofactor. It depends on Mn(2+) as a cofactor.

It carries out the reaction 2-C-methyl-D-erythritol 4-phosphate + NADP(+) = 1-deoxy-D-xylulose 5-phosphate + NADPH + H(+). It participates in isoprenoid biosynthesis; isopentenyl diphosphate biosynthesis via DXP pathway; isopentenyl diphosphate from 1-deoxy-D-xylulose 5-phosphate: step 1/6. Its function is as follows. Catalyzes the NADPH-dependent rearrangement and reduction of 1-deoxy-D-xylulose-5-phosphate (DXP) to 2-C-methyl-D-erythritol 4-phosphate (MEP). The polypeptide is 1-deoxy-D-xylulose 5-phosphate reductoisomerase (Bradyrhizobium diazoefficiens (strain JCM 10833 / BCRC 13528 / IAM 13628 / NBRC 14792 / USDA 110)).